The primary structure comprises 359 residues: Probable S-adenosylmethionine-dependent methyltransferase At5g38100 (359 aa).

The S-adenosyl-L-homocysteine site is built by Tyr19, Cys63, Asn68, Asp104, Ser133, and Phe134. Positions 172, 258, and 260 each coordinate Mg(2+).

Belongs to the methyltransferase superfamily. Type-7 methyltransferase family. As to quaternary structure, homodimer. Requires Mg(2+) as cofactor.

This is Probable S-adenosylmethionine-dependent methyltransferase At5g38100 from Arabidopsis thaliana (Mouse-ear cress).